Reading from the N-terminus, the 1786-residue chain is uncharacterized protein (1786 aa).

Disordered stretches follow at residues 140-191, 203-329, and 400-480; these read QGLR…LPEA, RRES…RGGV, and GGSD…TPPE. Positions 149-158 are enriched in polar residues; sequence SDMNSQTSLT. A compositionally biased stretch (low complexity) spans 232-247; that stretch reads GHAPEAPAPGESPASS. Over residues 248-259 the composition is skewed to polar residues; that stretch reads QCLPSQACENDF. Over residues 306 to 329 the composition is skewed to basic and acidic residues; sequence TSCRQHREEAGDRAGAGEDKRGGV. Positions 422 to 438 are enriched in low complexity; sequence STTPSTNTTRTPSPISS. Positions 467 to 480 are enriched in pro residues; the sequence is VPPPTGPGTATPPE. T721 is modified (phosphothreonine). 6 disordered regions span residues 746-907, 1081-1180, 1218-1242, 1291-1348, 1362-1460, and 1477-1550; these read SESK…SDGH, VRDV…NSSP, ASAQ…PKPA, KEGV…VSAR, SLYI…NSDC, and LLGR…EHTP. Composition is skewed to basic and acidic residues over residues 810–828 and 845–861; these read MQRE…DTSH and KPWE…HSEA. Low complexity predominate over residues 1105-1115; the sequence is KGSGDSSDKGS. Polar residues predominate over residues 1131–1140; that stretch reads TPASGGSRSL. The span at 1153–1164 shows a compositional bias: basic and acidic residues; the sequence is PREEGVDREPRE. A compositionally biased stretch (polar residues) spans 1167–1180; it reads SQVSNGGRLLNSSP. Position 1179 is a phosphoserine (S1179). Basic and acidic residues-rich tracts occupy residues 1223–1238 and 1301–1319; these read TPEK…EGKA and DPDK…DTGH. 3 stretches are compositionally biased toward polar residues: residues 1336–1345, 1389–1401, and 1504–1521; these read RNSNPSTESV, NVFT…TQKT, and ARSQ…SGTS. The residue at position 1767 (R1767) is an Omega-N-methylarginine.

This is an uncharacterized protein from Mus musculus (Mouse).